Reading from the N-terminus, the 143-residue chain is Large ribosomal subunit protein uL11 (143 aa).

This sequence belongs to the universal ribosomal protein uL11 family. Part of the ribosomal stalk of the 50S ribosomal subunit. Interacts with L10 and the large rRNA to form the base of the stalk. L10 forms an elongated spine to which L12 dimers bind in a sequential fashion forming a multimeric L10(L12)X complex. One or more lysine residues are methylated.

Functionally, forms part of the ribosomal stalk which helps the ribosome interact with GTP-bound translation factors. The protein is Large ribosomal subunit protein uL11 of Bifidobacterium adolescentis (strain ATCC 15703 / DSM 20083 / NCTC 11814 / E194a).